Reading from the N-terminus, the 502-residue chain is Probable malate:quinone oxidoreductase (502 aa).

It belongs to the MQO family. FAD is required as a cofactor.

It catalyses the reaction (S)-malate + a quinone = a quinol + oxaloacetate. It functions in the pathway carbohydrate metabolism; tricarboxylic acid cycle; oxaloacetate from (S)-malate (quinone route): step 1/1. The protein is Probable malate:quinone oxidoreductase of Parasynechococcus marenigrum (strain WH8102).